Reading from the N-terminus, the 69-residue chain is Putative membrane protein insertion efficiency factor (69 aa).

Belongs to the UPF0161 family.

It localises to the cell membrane. Could be involved in insertion of integral membrane proteins into the membrane. The polypeptide is Putative membrane protein insertion efficiency factor (Clostridium perfringens (strain SM101 / Type A)).